A 101-amino-acid polypeptide reads, in one-letter code: NAD(P)H-quinone oxidoreductase subunit 4L, chloroplastic (101 aa).

3 consecutive transmembrane segments (helical) span residues 2 to 22 (MLEH…YGLI), 32 to 52 (MCLE…SDFF), and 61 to 81 (IFSI…SAIV).

This sequence belongs to the complex I subunit 4L family. NDH is composed of at least 16 different subunits, 5 of which are encoded in the nucleus.

It localises to the plastid. It is found in the chloroplast thylakoid membrane. The enzyme catalyses a plastoquinone + NADH + (n+1) H(+)(in) = a plastoquinol + NAD(+) + n H(+)(out). The catalysed reaction is a plastoquinone + NADPH + (n+1) H(+)(in) = a plastoquinol + NADP(+) + n H(+)(out). Functionally, NDH shuttles electrons from NAD(P)H:plastoquinone, via FMN and iron-sulfur (Fe-S) centers, to quinones in the photosynthetic chain and possibly in a chloroplast respiratory chain. The immediate electron acceptor for the enzyme in this species is believed to be plastoquinone. Couples the redox reaction to proton translocation, and thus conserves the redox energy in a proton gradient. In Gossypium barbadense (Sea Island cotton), this protein is NAD(P)H-quinone oxidoreductase subunit 4L, chloroplastic.